Consider the following 285-residue polypeptide: Protoheme IX farnesyltransferase (285 aa).

Transmembrane regions (helical) follow at residues 13 to 33 (LGKL…AFLA), 40 to 60 (LLPI…AMII), 89 to 109 (EAII…FIDN), 110 to 130 (ILTA…YTIL), 137 to 157 (LNIV…YTSL), 165 to 185 (GFLL…SLAL), 194 to 214 (AHYP…AIAI), 218 to 238 (LMIP…LIAF), and 265 to 285 (FIFS…VKLI).

This sequence belongs to the UbiA prenyltransferase family. Protoheme IX farnesyltransferase subfamily.

The protein localises to the cell membrane. The enzyme catalyses heme b + (2E,6E)-farnesyl diphosphate + H2O = Fe(II)-heme o + diphosphate. It functions in the pathway porphyrin-containing compound metabolism; heme O biosynthesis; heme O from protoheme: step 1/1. Converts heme B (protoheme IX) to heme O by substitution of the vinyl group on carbon 2 of heme B porphyrin ring with a hydroxyethyl farnesyl side group. The chain is Protoheme IX farnesyltransferase from Saccharolobus islandicus (strain Y.G.57.14 / Yellowstone #1) (Sulfolobus islandicus).